A 254-amino-acid chain; its full sequence is Tyrosine-protein phosphatase YwqE (254 aa).

This sequence belongs to the metallo-dependent hydrolases superfamily. CpsB/CapC family. Mn(2+) is required as a cofactor.

It catalyses the reaction O-phospho-L-tyrosyl-[protein] + H2O = L-tyrosyl-[protein] + phosphate. Its activity is regulated as follows. Inhibited by vanadate and sodium pyrophosphate. Not inhibited by sodium fluoride. Dephosphorylates the phosphotyrosine-containing proteins YwqD, YwqF and Ssb. The polypeptide is Tyrosine-protein phosphatase YwqE (ywqE) (Bacillus subtilis (strain 168)).